Reading from the N-terminus, the 140-residue chain is Large ribosomal subunit protein bL17 (140 aa).

This sequence belongs to the bacterial ribosomal protein bL17 family. Part of the 50S ribosomal subunit. Contacts protein L32.

The polypeptide is Large ribosomal subunit protein bL17 (Paramagnetospirillum magneticum (strain ATCC 700264 / AMB-1) (Magnetospirillum magneticum)).